The sequence spans 190 residues: Protein GrpE (190 aa).

Basic and acidic residues predominate over residues 1–26 (MADKEKDAVIVDETEHVDVDSKESKK). The segment at 1–31 (MADKEKDAVIVDETEHVDVDSKESKKEKKTK) is disordered.

This sequence belongs to the GrpE family. In terms of assembly, homodimer.

It is found in the cytoplasm. In terms of biological role, participates actively in the response to hyperosmotic and heat shock by preventing the aggregation of stress-denatured proteins, in association with DnaK and GrpE. It is the nucleotide exchange factor for DnaK and may function as a thermosensor. Unfolded proteins bind initially to DnaJ; upon interaction with the DnaJ-bound protein, DnaK hydrolyzes its bound ATP, resulting in the formation of a stable complex. GrpE releases ADP from DnaK; ATP binding to DnaK triggers the release of the substrate protein, thus completing the reaction cycle. Several rounds of ATP-dependent interactions between DnaJ, DnaK and GrpE are required for fully efficient folding. The polypeptide is Protein GrpE (Acholeplasma laidlawii (strain PG-8A)).